The primary structure comprises 244 residues: tRNA pseudouridine synthase A (244 aa).

The Nucleophile role is filled by Asp52. Residue Tyr110 coordinates substrate.

Belongs to the tRNA pseudouridine synthase TruA family. In terms of assembly, homodimer.

The enzyme catalyses uridine(38/39/40) in tRNA = pseudouridine(38/39/40) in tRNA. Functionally, formation of pseudouridine at positions 38, 39 and 40 in the anticodon stem and loop of transfer RNAs. This chain is tRNA pseudouridine synthase A, found in Clostridium kluyveri (strain ATCC 8527 / DSM 555 / NBRC 12016 / NCIMB 10680 / K1).